The following is a 230-amino-acid chain: Fibrillarin-like rRNA/tRNA 2'-O-methyltransferase (230 aa).

S-adenosyl-L-methionine-binding positions include 87-88, 105-106, 130-131, and 150-153; these read TT, EF, DA, and DVAQ.

The protein belongs to the methyltransferase superfamily. Fibrillarin family. Interacts with nop5. Component of box C/D small ribonucleoprotein (sRNP) particles that contain rpl7ae, FlpA and nop5, plus a guide RNA.

Functionally, involved in pre-rRNA and tRNA processing. Utilizes the methyl donor S-adenosyl-L-methionine to catalyze the site-specific 2'-hydroxyl methylation of ribose moieties in rRNA and tRNA. Site specificity is provided by a guide RNA that base pairs with the substrate. Methylation occurs at a characteristic distance from the sequence involved in base pairing with the guide RNA. This chain is Fibrillarin-like rRNA/tRNA 2'-O-methyltransferase, found in Methanococcus maripaludis (strain C5 / ATCC BAA-1333).